The following is a 162-amino-acid chain: Heat shock protein beta-6 (162 aa).

The interval 1 to 72 is involved in stabilization of the HSPB1:HSBP6 heterodimer; the sequence is MEIRVPVQPS…PTAQVPTDPG (72 aa). Ser16 is modified (phosphoserine). An Isoglutamyl lysine isopeptide (Gln-Lys) (interchain with K-162) cross-link involves residue Gln31. Residues 56-162 form the sHSP domain; it reads RAPSVALPTA…ASLPSPPAAK (107 aa). The residue at position 66 (Gln66) is a Deamidated glutamine. Ser157 carries the post-translational modification Phosphoserine. Lys162 is covalently cross-linked (Isoglutamyl lysine isopeptide (Lys-Gln) (interchain with Q-31)).

The protein belongs to the small heat shock protein (HSP20) family. Homodimer. Small heat shock proteins form high molecular mass oligomers containing variable number of monomers; these oligomers display a very flexible quaternary structure easily exchanging their subunits. Heterooligomer with HSPB1; formed through oligomerization of HSPB1:HSBP6 dimers; subunit exchange leads to formation of at least two different heterooligomeric complexes, differing in variable quantities of HSPB1 and HSPB6 homodimers in addition to HSPB1:HSPB6 heterodimers. Heterooligomer with CRYAB; large heterooligomers consist of CRYAB homodimers and HSPB5:HSPB6 heterodimers but lacking HSPB6 homodimers. Interacts with BAG3. Interacts (phosphorylated) with YWHAZ. Interacts with PDE4A and PDE4D; required for maintenance of the non-phosphorylated state of HSPB6 under basal conditions. Interacts with KDR. Interacts with PRKD1. In terms of processing, the N-terminus is blocked. Phosphorylated at Ser-16 by PKA and probably PKD1K; required to protect cardiomyocytes from apoptosis. In terms of tissue distribution, widely expressed. High expression in muscle tissues.

The protein localises to the cytoplasm. It localises to the nucleus. Its subcellular location is the secreted. Small heat shock protein which functions as a molecular chaperone probably maintaining denatured proteins in a folding-competent state. Seems to have versatile functions in various biological processes. Plays a role in regulating muscle function such as smooth muscle vasorelaxation and cardiac myocyte contractility. May regulate myocardial angiogenesis implicating KDR. Overexpression mediates cardioprotection and angiogenesis after induced damage. Stabilizes monomeric YWHAZ thereby supporting YWHAZ chaperone-like activity. The chain is Heat shock protein beta-6 (Hspb6) from Rattus norvegicus (Rat).